The primary structure comprises 135 residues: Protein NrdI (135 aa).

The protein belongs to the NrdI family.

In terms of biological role, probably involved in ribonucleotide reductase function. This Salmonella gallinarum (strain 287/91 / NCTC 13346) protein is Protein NrdI.